A 496-amino-acid polypeptide reads, in one-letter code: Probable CtpA-like serine protease (496 aa).

Residues 1 to 16 (MDDKQHTTSSDDERAE) are compositionally biased toward basic and acidic residues. A disordered region spans residues 1-27 (MDDKQHTTSSDDERAENATSNQDQQTN). A compositionally biased stretch (polar residues) spans 17 to 27 (NATSNQDQQTN). Residues 39-59 (FISILIGTIIITAVITVVAYI) form a helical membrane-spanning segment. The region spanning 124 to 206 (TKSFNEGVSG…TEVTLTVQRG (83 aa)) is the PDZ domain. Catalysis depends on charge relay system residues serine 329, aspartate 340, and lysine 354.

It belongs to the peptidase S41A family.

The protein localises to the cell membrane. The polypeptide is Probable CtpA-like serine protease (Staphylococcus aureus (strain MRSA252)).